A 492-amino-acid chain; its full sequence is Ketol-acid reductoisomerase (NADP(+)) (492 aa).

The KARI N-terminal Rossmann domain occupies 15–208 (AQLGKCRFMA…GGHRAGVLES (194 aa)). Residues 45-48 (CGAQ), R68, R76, S78, and 108-110 (DKQ) contribute to the NADP(+) site. H132 is a catalytic residue. G158 is an NADP(+) binding site. 2 consecutive KARI C-terminal knotted domains span residues 209 to 344 (SFVA…TAAQ) and 345 to 485 (FEGK…MTDM). Mg(2+) contacts are provided by D217, E221, E389, and E393. A substrate-binding site is contributed by S414.

Belongs to the ketol-acid reductoisomerase family. Requires Mg(2+) as cofactor.

The enzyme catalyses (2R)-2,3-dihydroxy-3-methylbutanoate + NADP(+) = (2S)-2-acetolactate + NADPH + H(+). It carries out the reaction (2R,3R)-2,3-dihydroxy-3-methylpentanoate + NADP(+) = (S)-2-ethyl-2-hydroxy-3-oxobutanoate + NADPH + H(+). It participates in amino-acid biosynthesis; L-isoleucine biosynthesis; L-isoleucine from 2-oxobutanoate: step 2/4. The protein operates within amino-acid biosynthesis; L-valine biosynthesis; L-valine from pyruvate: step 2/4. Its function is as follows. Involved in the biosynthesis of branched-chain amino acids (BCAA). Catalyzes an alkyl-migration followed by a ketol-acid reduction of (S)-2-acetolactate (S2AL) to yield (R)-2,3-dihydroxy-isovalerate. In the isomerase reaction, S2AL is rearranged via a Mg-dependent methyl migration to produce 3-hydroxy-3-methyl-2-ketobutyrate (HMKB). In the reductase reaction, this 2-ketoacid undergoes a metal-dependent reduction by NADPH to yield (R)-2,3-dihydroxy-isovalerate. This chain is Ketol-acid reductoisomerase (NADP(+)), found in Erwinia tasmaniensis (strain DSM 17950 / CFBP 7177 / CIP 109463 / NCPPB 4357 / Et1/99).